We begin with the raw amino-acid sequence, 202 residues long: FMN-dependent NADH:quinone oxidoreductase (202 aa).

FMN is bound by residues Ser-9, 15–17, 95–98, and 139–142; these read SVS, MYNF, and SRGG.

Belongs to the azoreductase type 1 family. Homodimer. The cofactor is FMN.

The enzyme catalyses 2 a quinone + NADH + H(+) = 2 a 1,4-benzosemiquinone + NAD(+). It catalyses the reaction N,N-dimethyl-1,4-phenylenediamine + anthranilate + 2 NAD(+) = 2-(4-dimethylaminophenyl)diazenylbenzoate + 2 NADH + 2 H(+). Quinone reductase that provides resistance to thiol-specific stress caused by electrophilic quinones. In terms of biological role, also exhibits azoreductase activity. Catalyzes the reductive cleavage of the azo bond in aromatic azo compounds to the corresponding amines. This chain is FMN-dependent NADH:quinone oxidoreductase, found in Laribacter hongkongensis (strain HLHK9).